The sequence spans 134 residues: MSESLKILNNIRTLRAQARETSLETLEEMLEKLEVVVNERREEEQAMQAEIEERQQKLQKYRELLIADGIDPTDLLEAAGASKTGRAKRAARPAKYSYVDDNGETKTWTGQGRTLAVIKRAIEEEGKSLEDFLI.

A DNA-binding region spans residues 111 to 116 (QGRTLA).

This sequence belongs to the histone-like protein H-NS family. As to quaternary structure, homodimer that oligomerizes on DNA into higher-order complexes that form bridges between disparate regions of DNA compacting it. Interacts with YmoA and other similar proteins.

It is found in the cytoplasm. The protein localises to the nucleoid. In terms of biological role, a DNA-binding protein implicated in transcriptional repression and chromosome organization and compaction. Binds nucleation sites in AT-rich DNA and bridges them, forming higher-order nucleoprotein complexes and condensing the chromosome. As many horizontally transferred genes are AT-rich, it plays a central role in silencing foreign genes. A subset of genes are repressed by H-NS in association with other proteins. This chain is DNA-binding protein H-NS (hns), found in Proteus vulgaris.